The chain runs to 447 residues: 3-phosphoshikimate 1-carboxyvinyltransferase (447 aa).

The 3-phosphoshikimate site is built by lysine 25, serine 26, and arginine 30. Lysine 25 contributes to the phosphoenolpyruvate binding site. Residues glycine 96 and arginine 124 each coordinate phosphoenolpyruvate. Residues serine 171, serine 172, glutamine 173, serine 203, aspartate 325, and lysine 352 each contribute to the 3-phosphoshikimate site. Glutamine 173 serves as a coordination point for phosphoenolpyruvate. The active-site Proton acceptor is the aspartate 325. Phosphoenolpyruvate is bound by residues arginine 356, arginine 400, and lysine 425.

The protein belongs to the EPSP synthase family. As to quaternary structure, monomer.

It localises to the cytoplasm. It catalyses the reaction 3-phosphoshikimate + phosphoenolpyruvate = 5-O-(1-carboxyvinyl)-3-phosphoshikimate + phosphate. The protein operates within metabolic intermediate biosynthesis; chorismate biosynthesis; chorismate from D-erythrose 4-phosphate and phosphoenolpyruvate: step 6/7. Catalyzes the transfer of the enolpyruvyl moiety of phosphoenolpyruvate (PEP) to the 5-hydroxyl of shikimate-3-phosphate (S3P) to produce enolpyruvyl shikimate-3-phosphate and inorganic phosphate. This Bordetella petrii (strain ATCC BAA-461 / DSM 12804 / CCUG 43448) protein is 3-phosphoshikimate 1-carboxyvinyltransferase.